The chain runs to 313 residues: Probable GTP 3',8-cyclase (313 aa).

Positions 4 to 224 constitute a Radical SAM core domain; that stretch reads VYGRELEDLR…EIRNKHKRPR (221 aa). Residue R13 participates in GTP binding. The [4Fe-4S] cluster site is built by C20, C24, and C27. K60 provides a ligand contact to GTP. G64 contacts S-adenosyl-L-methionine. Position 90 (T90) interacts with GTP. S114 is a binding site for S-adenosyl-L-methionine. Position 151 (K151) interacts with GTP. [4Fe-4S] cluster contacts are provided by C244 and C247. 249–251 is a binding site for GTP; that stretch reads RIR. C261 contacts [4Fe-4S] cluster.

Belongs to the radical SAM superfamily. MoaA family. The cofactor is [4Fe-4S] cluster.

It catalyses the reaction GTP + AH2 + S-adenosyl-L-methionine = (8S)-3',8-cyclo-7,8-dihydroguanosine 5'-triphosphate + 5'-deoxyadenosine + L-methionine + A + H(+). It participates in cofactor biosynthesis; molybdopterin biosynthesis. Its function is as follows. Catalyzes the cyclization of GTP to (8S)-3',8-cyclo-7,8-dihydroguanosine 5'-triphosphate. This chain is Probable GTP 3',8-cyclase, found in Sulfolobus acidocaldarius (strain ATCC 33909 / DSM 639 / JCM 8929 / NBRC 15157 / NCIMB 11770).